A 119-amino-acid chain; its full sequence is Flagellar transcriptional regulator FlhD (119 aa).

The protein belongs to the FlhD family. In terms of assembly, homodimer; disulfide-linked. Forms a heterohexamer composed of two FlhC and four FlhD subunits. Each FlhC binds a FlhD dimer, forming a heterotrimer, and a hexamer assembles by dimerization of two heterotrimers.

The protein resides in the cytoplasm. In terms of biological role, functions in complex with FlhC as a master transcriptional regulator that regulates transcription of several flagellar and non-flagellar operons by binding to their promoter region. Activates expression of class 2 flagellar genes, including fliA, which is a flagellum-specific sigma factor that turns on the class 3 genes. Also regulates genes whose products function in a variety of physiological pathways. The polypeptide is Flagellar transcriptional regulator FlhD (Yersinia enterocolitica).